The following is a 338-amino-acid chain: uncharacterized protein (338 aa).

This is an uncharacterized protein from Acanthamoeba polyphaga (Amoeba).